A 277-amino-acid polypeptide reads, in one-letter code: Protein HEAT-INDUCED TAS1 TARGET 1 (277 aa).

This sequence belongs to the heat induced plant HTT protein family. As to quaternary structure, interacts with the heat shock proteins HSP70-14 and At2g33735/HSP40, and with NFYC2 in both cytoplasm and nucleus. Expressed ubiquitously, including in seedlings, leaves, stems, inflorescences and siliques.

The protein resides in the cytoplasm. It is found in the nucleus. Mediates both basal and acquired thermotolerance via HSFA1s-directed pathways (e.g. HSFA1A, HSFA1B, and HSFA1D). Triggers the expression of HSFA1A and HSFA1B. This is Protein HEAT-INDUCED TAS1 TARGET 1 from Arabidopsis thaliana (Mouse-ear cress).